Consider the following 269-residue polypeptide: NAD-capped RNA hydrolase NudC (269 aa).

Arg81 contacts substrate. Positions 110, 113, 128, and 131 each coordinate Zn(2+). Substrate is bound at residue Tyr136. The region spanning 137–260 is the Nudix hydrolase domain; the sequence is PRIFPCIIVA…TIARALIEQT (124 aa). A divalent metal cation contacts are provided by Ala170, Glu186, and Glu190. Positions 171–192 match the Nudix box motif; the sequence is GFVEVGETLEQCVAREVLEETG. Residue 204–211 coordinates substrate; sequence QPWAFPSS. Glu231 contributes to the a divalent metal cation binding site. Ala253 is a substrate binding site.

Belongs to the Nudix hydrolase family. NudC subfamily. In terms of assembly, homodimer. The cofactor is Mg(2+). Mn(2+) serves as cofactor. It depends on Zn(2+) as a cofactor.

The catalysed reaction is a 5'-end NAD(+)-phospho-ribonucleoside in mRNA + H2O = a 5'-end phospho-adenosine-phospho-ribonucleoside in mRNA + beta-nicotinamide D-ribonucleotide + 2 H(+). It carries out the reaction NAD(+) + H2O = beta-nicotinamide D-ribonucleotide + AMP + 2 H(+). The enzyme catalyses NADH + H2O = reduced beta-nicotinamide D-ribonucleotide + AMP + 2 H(+). In terms of biological role, mRNA decapping enzyme that specifically removes the nicotinamide adenine dinucleotide (NAD) cap from a subset of mRNAs by hydrolyzing the diphosphate linkage to produce nicotinamide mononucleotide (NMN) and 5' monophosphate mRNA. The NAD-cap is present at the 5'-end of some mRNAs and stabilizes RNA against 5'-processing. Has preference for mRNAs with a 5'-end purine. Catalyzes the hydrolysis of a broad range of dinucleotide pyrophosphates. This chain is NAD-capped RNA hydrolase NudC, found in Vibrio cholerae serotype O1 (strain ATCC 39315 / El Tor Inaba N16961).